A 309-amino-acid chain; its full sequence is Golgi-associated RAB2 interactor protein 1A (309 aa).

Phosphoserine is present on residues S231, S263, and S267.

The protein belongs to the GARIN family. In terms of assembly, interacts (via N-terminus) with RAB2B (in GTP-bound form).

The protein resides in the golgi apparatus. RAB2B effector protein required for accurate acrosome formation and normal male fertility. The chain is Golgi-associated RAB2 interactor protein 1A from Homo sapiens (Human).